Reading from the N-terminus, the 511-residue chain is Probable cytochrome P450 4d21 (511 aa).

Cys456 lines the heme pocket.

It belongs to the cytochrome P450 family. Heme is required as a cofactor.

Its subcellular location is the endoplasmic reticulum membrane. The protein localises to the microsome membrane. Its function is as follows. May be involved in the metabolism of insect hormones and in the breakdown of synthetic insecticides. The sequence is that of Probable cytochrome P450 4d21 (Cyp4d21) from Drosophila melanogaster (Fruit fly).